The sequence spans 1769 residues: Tight junction protein 1 (1769 aa).

One can recognise a PDZ 1 domain in the interval 23–110; that stretch reads TVTLHRAPGF…NAKITIRRKK (88 aa). Residues 102 to 112 show a composition bias toward basic residues; it reads AKITIRRKKKV. The tract at residues 102–188 is disordered; sequence AKITIRRKKK…QPPKPTKVTL (87 aa). Positions 123–135 are enriched in acidic residues; that stretch reads PVSENEDSYDEEV. Ser125 bears the Phosphoserine mark. Tyr131 is modified (phosphotyrosine). Residues 148-174 show a composition bias toward basic and acidic residues; that stretch reads RRSEKSWARDRSASRERSLSPRSDRRS. A phosphoserine mark is found at Ser174, Ser177, and Ser178. The residue at position 184 (Thr184) is a Phosphothreonine. A PDZ 2 domain is found at 185–263; sequence KVTLVKSRKN…KLKMVVQRDE (79 aa). Residues Ser211 and Ser240 each carry the phosphoserine modification. Thr266 is modified (phosphothreonine). Ser274, Ser276, Ser279, Ser283, Ser289, Ser293, Ser296, Ser299, Ser322, Ser328, Ser333, Ser336, and Ser352 each carry phosphoserine. The interval 295-362 is disordered; the sequence is ASDHSGRSHD…TPVKHADDHT (68 aa). Residues 298 to 326 are compositionally biased toward basic and acidic residues; sequence HSGRSHDRPPRHSRSRSPDQRSEPSDHSR. Thr353 carries the phosphothreonine modification. Positions 420 to 501 constitute a PDZ 3 domain; that stretch reads SMKLVKFRKG…GEEVTILAQK (82 aa). The SH3 domain occupies 515–583; that stretch reads GDSFYIRTHF…PNKNRAEQLA (69 aa). Positions 609 to 790 constitute a Guanylate kinase-like domain; the sequence is SKRNLRKSRE…WYGALKEAIQ (182 aa). Phosphoserine occurs at positions 616 and 621. The occludin (OCLN)-binding region stretch occupies residues 632–875; that stretch reads YERVVLREAG…GTPPESAITR (244 aa). Thr808 is modified (phosphothreonine). Residues Ser809 and Ser820 each carry the phosphoserine modification. Phosphotyrosine is present on Tyr821. Residues Ser823, Ser827, and Ser836 each carry the phosphoserine modification. Disordered regions lie at residues 824–976 and 1010–1067; these read APGS…LRTP and EMMR…SYTD. Residues Thr845, Thr847, Thr853, Thr860, and Thr867 each carry the phosphothreonine modification. Residues 878 to 891 are compositionally biased toward basic and acidic residues; the sequence is EPVREDSSGMHHEN. Residues 892 to 905 show a composition bias toward low complexity; the sequence is QTYPPYSPQAQPQP. Ser911 is modified (phosphoserine). Composition is skewed to polar residues over residues 933–952 and 962–976; these read PETN…TLTN and PSTS…LRTP. A Phosphoserine modification is found at Ser967. A Phosphoserine modification is found at Ser1070. 3 disordered regions span residues 1091–1212, 1224–1261, and 1273–1589; these read SYYD…KAGH, PLIP…MKPQ, and KRSA…EFDS. A compositionally biased stretch (basic and acidic residues) spans 1108–1124; that stretch reads QHPRDLDSRQHPEESSE. Ser1138 is modified (phosphoserine). Tyr1139 and Tyr1164 each carry phosphotyrosine. The actin-binding region (ABR) stretch occupies residues 1150 to 1370; sequence RTSTLRHEEQ…FDRRSFENKP (221 aa). The span at 1273–1286 shows a compositional bias: basic and acidic residues; sequence KRSASLENKKDENH. The span at 1300-1310 shows a compositional bias: pro residues; that stretch reads PGAPIIGPKPT. Over residues 1335 to 1346 the composition is skewed to basic and acidic residues; that stretch reads PPEDIVRSNHYD. At Tyr1353 the chain carries Phosphotyrosine. Ser1365 carries the phosphoserine modification. Residues 1387 to 1401 are compositionally biased toward polar residues; sequence HSQNQTNFSSYSSKG. Residues 1402 to 1419 are compositionally biased toward basic and acidic residues; that stretch reads KSPEADAPDRSFGEKRYE. The residue at position 1412 (Ser1412) is a Phosphoserine. Composition is skewed to polar residues over residues 1460-1471 and 1514-1523; these read NSISLDFQNSLV and AEQTQKTVTP. Residues 1539–1548 show a composition bias toward basic and acidic residues; the sequence is PFERKFESPK. A phosphoserine mark is found at Ser1546 and Ser1618. Residues 1635-1769 form the ZU5 domain; that stretch reads ATARGVFNNN…NCVSVLIDHF (135 aa).

The protein belongs to the MAGUK family. As to quaternary structure, homodimer. Forms heterodimers TJP3. Forms a heterodimer (via PDZ2 domain) with TJP2/ZO2 (via PDZ2 domain). Interacts with OCLN. Interacts with CALM, claudins, CGN/cingulin, CXADR, GJA12, GJD3 and UBN1. Interacts (via ZU5 domain) with CDC42BPB and MYZAP. Interacts (via PDZ domain) with GJA1. Interacts (via PDZ domains) with ANKRD2. Interacts with POPDC1 (via the C-terminus cytoplasmic tail). Interacts with HSPA4. Interacts with KIRREL1. Interacts with DLL1. Interacts with USP53 (via the C-terminal region). Interacts with DNMBP (via C-terminal domain); required for the apical cell-cell junction localization of DNMBP. Interacts with SPEF1. Interacts (via N-terminus) with CTNNA1. Interacts with CLDN18. Interacts with CLDN16 (via TRV motif); this is a prerequisite for anchoring of CLDN16 at the tight junction. Interacts with PKP1; the interaction facilitates TJP1/ZO-1 localization to the plasma membrane. Interacts with PATJ (via PDZ1-6 domains); the interaction is required for attachment and extension of TJP1/ZO1 condensates along the apical cell interface. In terms of processing, phosphorylated at tyrosine redidues in response to epidermal growth factor (EGF). This response is dependent on an intact actin microfilament system. Dephosphorylated by PTPRJ.

The protein resides in the cell membrane. Its subcellular location is the cell junction. The protein localises to the tight junction. It localises to the gap junction. TJP1, TJP2, and TJP3 are closely related scaffolding proteins that link tight junction (TJ) transmembrane proteins such as claudins, junctional adhesion molecules, and occludin to the actin cytoskeleton. Forms a multistranded TJP1/ZO1 condensate which elongates to form a tight junction belt, the belt is anchored at the apical cell membrane via interaction with PATJ. The tight junction acts to limit movement of substances through the paracellular space and as a boundary between the compositionally distinct apical and basolateral plasma membrane domains of epithelial and endothelial cells. Necessary for lumenogenesis, and particularly efficient epithelial polarization and barrier formation. Plays a role in the regulation of cell migration by targeting CDC42BPBb to the leading edge of migrating cells. With TJP2 and TJP3, participates in the junctional retention and stability of the transcription factor DBPA, but is not involved in its shuttling to the nucleus. May play a role in mediating cell morphology changes during ameloblast differentiation via its role in tight junctions. In Canis lupus familiaris (Dog), this protein is Tight junction protein 1.